A 194-amino-acid polypeptide reads, in one-letter code: Calcium channel flower (194 aa).

Helical transmembrane passes span 35 to 55, 66 to 88, and 113 to 133; these read LGIV…FSII, IIQM…VCFE, and AIPP…GLIF.

This sequence belongs to the calcium channel flower family. Homomultimer. Associates with the dally/ magu complex.

Its subcellular location is the cytoplasmic vesicle. The protein localises to the secretory vesicle. It localises to the synaptic vesicle membrane. The protein resides in the presynaptic cell membrane. It is found in the endosome. Channel activity is inhibited by La(3+), which reduces Ca(2+) influx and thus inhibits it's function in promoting activity-dependent bulk endocytosis (ADBE) in response to high stimuli. In terms of biological role, transmembrane protein which mediates synaptic endocytosis, fitness-based cell culling, neuronal culling, morphogen gradient scaling, and calcium transport. Regulates synaptic endocytosis and hence couples exo- with endocytosis. Controls two major modes of synaptic vesicle (SV) endocytosis in the synaptic boutons of neuromuscular junctions (NMJs); Ca(2+) channel-independent Clathrin-mediated endocytosis (CME) in response to mild stimulation, and Ca(2+) channel-dependent activity-dependent bulk endocytosis (ADBE) in response to strong stimulation. Functions in ADBE and subsequent SV reformation from bulk endosomes by initiating Ca(2+) channel-dependent phosphatidylinositol 4,5-bisphosphate (PtdIns(4,5)P2) compartmentalization in synaptic boutons. There it acts at the periactive zone to provide the low Ca(2+) levels required to initiate Calcineurin activation and upregulate PtdIns(4,5)P2. Conversely PtdIns(4,5)P2 enhances fwe Ca(2+) channel-activity, establishing a positive feedback loop that induces PtdIns(4,5)P2 microdomain at the periactive zone. These microdomains trigger bulk membrane invagination (i.e. ADBE) by triggering actin polymerization while also promoting localization of fwe to bulk endosomes, thereby removing the ADBE trigger to reduce endocytosis and prevent excess membrane uptake. PtdIns(4,5)P2 then promotes SV reformation from the bulk endosomes, to coordinate ADBE and subsequent SV reformation. Different combinations of the flower isoforms at the cell membrane are also required for the identification and elimination of suboptimal or supernumerary cells during development, regeneration, and adulthood. Required for the recognition and elimination of unfit cells in the developing wing during cell competition. In the developing pupal retina, mediates the elimination of unwanted postmitotic neurons, including supernumerary photoreceptor neurons that form at the periphery of the retina and are contained within incomplete ommatidia units. Also required for efficient elimination and replacement of old neurons by newly generated neurons during regeneration in the adult brain following mechanical injury. Downstream of the flower fitness fingerprints, cells identified as unwanted or unfit are eliminated via apoptosis through the expression of ahuizotl (azot). However, the cells marked for elimination by the flower isoforms only undergo apoptosis if additional thresholds are met; (1) their neighboring fit/healthy cells express different levels of the fwe isoforms, and (2) the levels of the protective signal SPARC expressed by the loser or unwanted cells are unable to inhibit caspase activation. These additional thresholds for flower-mediated apoptosis, allows useful cells to recover from transient and limited stress before they are unnecessarily eliminated. Functions with dally and magu in a mechanism of scaling, which utilises apoptosis to ensure that the dpp morphogen gradient, which mediates organ growth, remains proportional to the size of the growing wing. In this mechanism, fwe represses dally- and Magu-dependent activity in expanding the gradient, and dally/Magu inhibits fwe-dependent apoptosis to keep cell death rate low. When the levels of these different proteins are optimally regulated the gradient correctly scales with organ growth but when this fails, fwe-mediated apoptosis is activated to trim the developing tissue to match the correct size of the gradient. The sequence is that of Calcium channel flower from Drosophila yakuba (Fruit fly).